Consider the following 225-residue polypeptide: MNSIKFPVLDRTTKNSVISTTLNDLSNWSRLSSLWPLLYGTSCCFIEFASLIGSRFDFDRYGLVPRSSPRQADLILTAGTVTMKMAPSLVRLYEQMPEPKYVIAMGACTITGGMFSTDSYSTVRGVDKLIPVDVYLPGCPPKPEAVIDAITKLRKKIAREIYKDRIIPQRGNRCFTTNHKFFFVRSTQTGNYDQELLYPPSSTSEISTETFFKYKSPVSSHELVN.

[4Fe-4S] cluster-binding residues include cysteine 43, cysteine 44, cysteine 108, and cysteine 139.

This sequence belongs to the complex I 20 kDa subunit family. As to quaternary structure, NDH is composed of at least 16 different subunits, 5 of which are encoded in the nucleus. The cofactor is [4Fe-4S] cluster.

Its subcellular location is the plastid. The protein localises to the chloroplast thylakoid membrane. The enzyme catalyses a plastoquinone + NADH + (n+1) H(+)(in) = a plastoquinol + NAD(+) + n H(+)(out). The catalysed reaction is a plastoquinone + NADPH + (n+1) H(+)(in) = a plastoquinol + NADP(+) + n H(+)(out). Functionally, NDH shuttles electrons from NAD(P)H:plastoquinone, via FMN and iron-sulfur (Fe-S) centers, to quinones in the photosynthetic chain and possibly in a chloroplast respiratory chain. The immediate electron acceptor for the enzyme in this species is believed to be plastoquinone. Couples the redox reaction to proton translocation, and thus conserves the redox energy in a proton gradient. The protein is NAD(P)H-quinone oxidoreductase subunit K, chloroplastic of Lobularia maritima (Sweet alyssum).